Here is a 203-residue protein sequence, read N- to C-terminus: ATP-dependent Clp protease proteolytic subunit (203 aa).

Ser107 acts as the Nucleophile in catalysis. His132 is a catalytic residue.

The protein belongs to the peptidase S14 family. Fourteen ClpP subunits assemble into 2 heptameric rings which stack back to back to give a disk-like structure with a central cavity, resembling the structure of eukaryotic proteasomes.

The protein resides in the cytoplasm. The enzyme catalyses Hydrolysis of proteins to small peptides in the presence of ATP and magnesium. alpha-casein is the usual test substrate. In the absence of ATP, only oligopeptides shorter than five residues are hydrolyzed (such as succinyl-Leu-Tyr-|-NHMec, and Leu-Tyr-Leu-|-Tyr-Trp, in which cleavage of the -Tyr-|-Leu- and -Tyr-|-Trp bonds also occurs).. Functionally, cleaves peptides in various proteins in a process that requires ATP hydrolysis. Has a chymotrypsin-like activity. Plays a major role in the degradation of misfolded proteins. The sequence is that of ATP-dependent Clp protease proteolytic subunit from Shewanella sediminis (strain HAW-EB3).